Here is a 158-residue protein sequence, read N- to C-terminus: Cyclic pyranopterin monophosphate synthase (158 aa).

Substrate-binding positions include 74–76 (MCH) and 112–113 (ME). The active site involves D127.

Belongs to the MoaC family. In terms of assembly, homohexamer; trimer of dimers.

It carries out the reaction (8S)-3',8-cyclo-7,8-dihydroguanosine 5'-triphosphate = cyclic pyranopterin phosphate + diphosphate. It functions in the pathway cofactor biosynthesis; molybdopterin biosynthesis. Functionally, catalyzes the conversion of (8S)-3',8-cyclo-7,8-dihydroguanosine 5'-triphosphate to cyclic pyranopterin monophosphate (cPMP). The chain is Cyclic pyranopterin monophosphate synthase from Helicobacter pylori (strain Shi470).